Reading from the N-terminus, the 87-residue chain is uncharacterized protein (87 aa).

The N-terminal stretch at 1-25 (MKIRKILLSSALSFGMLISAVPALA) is a signal peptide.

This is an uncharacterized protein from Bacillus subtilis (strain 168).